The following is a 298-amino-acid chain: UDP-N-acetylenolpyruvoylglucosamine reductase (298 aa).

One can recognise an FAD-binding PCMH-type domain in the interval Arg26–Gly190. Arg170 is a catalytic residue. Ser219 acts as the Proton donor in catalysis. The active site involves Glu289.

Belongs to the MurB family. The cofactor is FAD.

The protein resides in the cytoplasm. The enzyme catalyses UDP-N-acetyl-alpha-D-muramate + NADP(+) = UDP-N-acetyl-3-O-(1-carboxyvinyl)-alpha-D-glucosamine + NADPH + H(+). It participates in cell wall biogenesis; peptidoglycan biosynthesis. Its function is as follows. Cell wall formation. The protein is UDP-N-acetylenolpyruvoylglucosamine reductase of Alkalilimnicola ehrlichii (strain ATCC BAA-1101 / DSM 17681 / MLHE-1).